Here is an 85-residue protein sequence, read N- to C-terminus: uncharacterized protein (85 aa).

The next 2 membrane-spanning stretches (helical) occupy residues 20-42 and 52-69; these read IYWFFCLYYKDGPILYTIYTTFL and IILRNTVAFLSFMYKHYY.

It localises to the membrane. This is an uncharacterized protein from Saccharomyces cerevisiae (strain ATCC 204508 / S288c) (Baker's yeast).